Here is a 544-residue protein sequence, read N- to C-terminus: Chaperonin GroEL (544 aa).

Residues 30–33 (TLGP), K51, 87–91 (DGTTT), G415, 479–481 (NAA), and D495 each bind ATP. A compositionally biased stretch (low complexity) spans 525–537 (PQDTPATAAAPDM). Positions 525 to 544 (PQDTPATAAAPDMGGMGGMM) are disordered.

The protein belongs to the chaperonin (HSP60) family. Forms a cylinder of 14 subunits composed of two heptameric rings stacked back-to-back. Interacts with the co-chaperonin GroES.

Its subcellular location is the cytoplasm. It carries out the reaction ATP + H2O + a folded polypeptide = ADP + phosphate + an unfolded polypeptide.. Its function is as follows. Together with its co-chaperonin GroES, plays an essential role in assisting protein folding. The GroEL-GroES system forms a nano-cage that allows encapsulation of the non-native substrate proteins and provides a physical environment optimized to promote and accelerate protein folding. This Ruthia magnifica subsp. Calyptogena magnifica protein is Chaperonin GroEL.